The primary structure comprises 217 residues: GTPase IMAP family member GIMD1 (217 aa).

One can recognise an AIG1-type G domain in the interval 6–217 (KMIINLAVFG…ENHFQVLSLA (212 aa)). GTP is bound by residues 15-23 (GRTQSGKSS), Ser-36, and 148-150 (HAE).

This sequence belongs to the TRAFAC class TrmE-Era-EngA-EngB-Septin-like GTPase superfamily. AIG1/Toc34/Toc159-like paraseptin GTPase family. IAN subfamily.

This is GTPase IMAP family member GIMD1 (Gimd1) from Mus musculus (Mouse).